A 219-amino-acid chain; its full sequence is Mitochondrial fission factor homolog A (219 aa).

Over 1-199 (MAEINRMQYE…ENKERVKHEM (199 aa)) the chain is Cytoplasmic. Positions 164–194 (DLALADAASLRRQIIKLNRRLLLLEEENKER) form a coiled coil. The helical; Anchor for type IV membrane protein transmembrane segment at 200-217 (TMYSIIIIFGLLNSWLWL) threads the bilayer. Topologically, residues 218–219 (RR) are extracellular.

The protein belongs to the Tango11 family.

Its subcellular location is the mitochondrion outer membrane. It is found in the peroxisome. The protein resides in the cytoplasmic vesicle. The protein localises to the secretory vesicle. It localises to the synaptic vesicle. Functionally, plays a role in mitochondrial and peroxisomal fission. Promotes the recruitment and association of the fission mediator dynamin-related protein 1 (DNM1L) to the mitochondrial surface. The sequence is that of Mitochondrial fission factor homolog A (mff-a) from Xenopus laevis (African clawed frog).